Reading from the N-terminus, the 629-residue chain is Phosphomethylpyrimidine synthase (629 aa).

A disordered region spans residues Met-1 to Gly-20. Substrate-binding positions include Asn-233, Met-262, Tyr-291, His-327, Ser-347 to Gly-349, Asp-388 to Arg-391, and Glu-427. A Zn(2+)-binding site is contributed by His-431. Tyr-454 provides a ligand contact to substrate. A Zn(2+)-binding site is contributed by His-495. Positions 575, 578, and 583 each coordinate [4Fe-4S] cluster.

It belongs to the ThiC family. In terms of assembly, homodimer. It depends on [4Fe-4S] cluster as a cofactor.

The catalysed reaction is 5-amino-1-(5-phospho-beta-D-ribosyl)imidazole + S-adenosyl-L-methionine = 4-amino-2-methyl-5-(phosphooxymethyl)pyrimidine + CO + 5'-deoxyadenosine + formate + L-methionine + 3 H(+). It participates in cofactor biosynthesis; thiamine diphosphate biosynthesis. Its function is as follows. Catalyzes the synthesis of the hydroxymethylpyrimidine phosphate (HMP-P) moiety of thiamine from aminoimidazole ribotide (AIR) in a radical S-adenosyl-L-methionine (SAM)-dependent reaction. This chain is Phosphomethylpyrimidine synthase, found in Pseudomonas savastanoi pv. phaseolicola (strain 1448A / Race 6) (Pseudomonas syringae pv. phaseolicola (strain 1448A / Race 6)).